The sequence spans 500 residues: Allene oxide synthase 3 (500 aa).

Residues 1–26 are disordered; that stretch reads MAPPPVNSGDAAAAATGEKSKLSPSG. Substrate contacts are provided by residues 297 to 298, K304, and 365 to 368; these read FN and PVEF. Residue C452 coordinates heme.

It belongs to the cytochrome P450 family. Heme serves as cofactor. In terms of tissue distribution, not expressed in dark-grown seedlings.

It carries out the reaction (13S)-hydroperoxy-(9Z,11E,15Z)-octadecatrienoate = (9Z,13S,15Z)-12,13-epoxyoctadeca-9,11,15-trienoate + H2O. Its pathway is lipid metabolism; oxylipin biosynthesis. Its function is as follows. Involved in the biosynthesis of jasmonic acid, a growth regulator that is implicated also as a signaling molecule in plant defense. Converts 13-hydroperoxylinolenic acid to 12,13-epoxylinolenic acid. The protein is Allene oxide synthase 3 (CYP74A3) of Oryza sativa subsp. japonica (Rice).